An 860-amino-acid polypeptide reads, in one-letter code: Leucine--tRNA ligase (860 aa).

The 'HIGH' region signature appears at 42 to 52 (PYPSGRLHMGH). A 'KMSKS' region motif is present at residues 619 to 623 (KMSKS). Lys-622 is an ATP binding site.

Belongs to the class-I aminoacyl-tRNA synthetase family.

The protein localises to the cytoplasm. The catalysed reaction is tRNA(Leu) + L-leucine + ATP = L-leucyl-tRNA(Leu) + AMP + diphosphate. This chain is Leucine--tRNA ligase, found in Shigella boydii serotype 18 (strain CDC 3083-94 / BS512).